Here is a 561-residue protein sequence, read N- to C-terminus: uncharacterized protein (561 aa).

The next 2 helical transmembrane spans lie at 29-49 (FIFNVGSLTPTTAVLGVKKII) and 80-100 (FLFHTVGFFPIYTSSIGASII).

It is found in the cell membrane. This is an uncharacterized protein from Mycoplasma genitalium (strain ATCC 33530 / DSM 19775 / NCTC 10195 / G37) (Mycoplasmoides genitalium).